A 235-amino-acid polypeptide reads, in one-letter code: LexA repressor (235 aa).

A DNA-binding region (H-T-H motif) is located at residues 47-67; sequence IREIADAVGLTSTSSVAHQLR. Catalysis depends on for autocatalytic cleavage activity residues Ser-159 and Lys-196.

This sequence belongs to the peptidase S24 family. Homodimer.

It carries out the reaction Hydrolysis of Ala-|-Gly bond in repressor LexA.. Its function is as follows. Represses a number of genes involved in the response to DNA damage (SOS response), including recA and lexA. In the presence of single-stranded DNA, RecA interacts with LexA causing an autocatalytic cleavage which disrupts the DNA-binding part of LexA, leading to derepression of the SOS regulon and eventually DNA repair. This is LexA repressor from Mycobacterium leprae (strain Br4923).